The chain runs to 217 residues: Transcription antitermination protein NusB (217 aa).

The protein belongs to the NusB family.

Involved in transcription antitermination. Required for transcription of ribosomal RNA (rRNA) genes. Binds specifically to the boxA antiterminator sequence of the ribosomal RNA (rrn) operons. The polypeptide is Transcription antitermination protein NusB (Microcystis aeruginosa (strain NIES-843 / IAM M-2473)).